Reading from the N-terminus, the 142-residue chain is Large ribosomal subunit protein uL16 (142 aa).

Belongs to the universal ribosomal protein uL16 family. As to quaternary structure, part of the 50S ribosomal subunit.

Binds 23S rRNA and is also seen to make contacts with the A and possibly P site tRNAs. This Thermotoga sp. (strain RQ2) protein is Large ribosomal subunit protein uL16.